We begin with the raw amino-acid sequence, 124 residues long: Small ribosomal subunit protein uS12 (124 aa).

D89 bears the 3-methylthioaspartic acid mark. The segment at 104–124 (ALGVEDRKRGRSKYGAKRPKA) is disordered. Positions 112–124 (RGRSKYGAKRPKA) are enriched in basic residues.

The protein belongs to the universal ribosomal protein uS12 family. Part of the 30S ribosomal subunit. Contacts proteins S8 and S17. May interact with IF1 in the 30S initiation complex.

With S4 and S5 plays an important role in translational accuracy. Functionally, interacts with and stabilizes bases of the 16S rRNA that are involved in tRNA selection in the A site and with the mRNA backbone. Located at the interface of the 30S and 50S subunits, it traverses the body of the 30S subunit contacting proteins on the other side and probably holding the rRNA structure together. The combined cluster of proteins S8, S12 and S17 appears to hold together the shoulder and platform of the 30S subunit. The polypeptide is Small ribosomal subunit protein uS12 (Treponema denticola (strain ATCC 35405 / DSM 14222 / CIP 103919 / JCM 8153 / KCTC 15104)).